The sequence spans 330 residues: uncharacterized protein (330 aa).

The active site involves His257.

Belongs to the IUNH family.

This is an uncharacterized protein from Schizosaccharomyces pombe (strain 972 / ATCC 24843) (Fission yeast).